The following is a 363-amino-acid chain: MGEVKLEDIFEILDNYDKDNITIATLGSHTSLHILQGAKEEGFRTAIVCEKGREVPYQRFDVADEYIIVDKFKDIVNEDVQQKLRDMNAIVIPHGSFVAYAGLDNVEDKFNVPMFGNRDILRWEAERDKERALLVEGEVRIPYKYDNPSEIDRPVMVKFPGARGGRGYFVASSPEEFNKKIDAMKARGWLEDSDVANAHIEEYVSGCNYCIHYFYSALEDEVELLGMDTRYESSIDGFVRMPAKDQLDIDLSPSYVVTGNHPAVIRESLLPQVFEMADKLVESAKKLVAPGLNGPFCMQTLVNDNLEVICFEISARTDGGTNTFMGGSPYSYLTYGKPMSMGRRIALEIKNAIKKEELEKIIT.

Residues histidine 29 and serine 96 each contribute to the 5-amino-1-(5-phospho-beta-D-ribosyl)imidazole-4-carboxamide site. Residues arginine 118–lysine 354 form the ATP-grasp domain. Residues proline 148 to cysteine 210 and glutamate 232 each bind ATP. Asparagine 260 is a binding site for 5-amino-1-(5-phospho-beta-D-ribosyl)imidazole-4-carboxamide. Mg(2+) is bound by residues glutamine 299 and glutamate 312.

The protein belongs to the phosphohexose mutase family. It depends on Mg(2+) as a cofactor. The cofactor is Mn(2+).

The enzyme catalyses 5-amino-1-(5-phospho-beta-D-ribosyl)imidazole-4-carboxamide + formate + ATP = 5-formamido-1-(5-phospho-D-ribosyl)imidazole-4-carboxamide + ADP + phosphate. The protein operates within purine metabolism; IMP biosynthesis via de novo pathway; 5-formamido-1-(5-phospho-D-ribosyl)imidazole-4-carboxamide from 5-amino-1-(5-phospho-D-ribosyl)imidazole-4-carboxamide (formate route): step 1/1. Functionally, catalyzes the ATP- and formate-dependent formylation of 5-aminoimidazole-4-carboxamide-1-beta-d-ribofuranosyl 5'-monophosphate (AICAR) to 5-formaminoimidazole-4-carboxamide-1-beta-d-ribofuranosyl 5'-monophosphate (FAICAR) in the absence of folates. The polypeptide is 5-formaminoimidazole-4-carboxamide-1-(beta)-D-ribofuranosyl 5'-monophosphate synthetase (Methanobrevibacter smithii (strain ATCC 35061 / DSM 861 / OCM 144 / PS)).